We begin with the raw amino-acid sequence, 384 residues long: Cell division protein FtsZ (384 aa).

Residues 20 to 24, 107 to 109, E138, R142, and N186 each bind GTP; these read GGGGN and GTG.

The protein belongs to the FtsZ family. Homodimer. Polymerizes to form a dynamic ring structure in a strictly GTP-dependent manner. Interacts directly with several other division proteins.

Its subcellular location is the cytoplasm. Functionally, essential cell division protein that forms a contractile ring structure (Z ring) at the future cell division site. The regulation of the ring assembly controls the timing and the location of cell division. One of the functions of the FtsZ ring is to recruit other cell division proteins to the septum to produce a new cell wall between the dividing cells. Binds GTP and shows GTPase activity. This is Cell division protein FtsZ from Wigglesworthia glossinidia brevipalpis.